Consider the following 350-residue polypeptide: MFIRPVLSSSLGHAARSSLRSQAPAVRQYATEAGKSSGGSNLPLVLALGGVAGIGAWYGLGGFDDPKKVSNKIQEKGKEAVDQAKGAVEGGALNKDQFVEFTLKEIKPYNHDSATLIFELPEGKKPGMGVASAVVVKAVGDGLKDDQGKDVIRPYTPITSPDTVGHMDFLVKKYPGGKMTTYMHSMKPGDKLGIKGPIAKFAYKANEFESIGMIAGGSGITPMYQVIQDIASNPSDKTKVTLIYSNKTEQDILLREQFDQLAKKDDRFTIIYGLDKLPKGFNGFEGYVTEDLVKKHLPQPELADKAKIFVCGPPPQVEAISGKKGPKGSQGELKGLLAKLGYQADQVYKF.

The chain crosses the membrane as a helical span at residues 43–63 (PLVLALGGVAGIGAWYGLGGF). Residues 96-204 (DQFVEFTLKE…KGPIAKFAYK (109 aa)) form the FAD-binding FR-type domain. Residue 207 to 242 (EFESIGMIAGGSGITPMYQVIQDIASNPSDKTKVTL) participates in FAD binding.

The protein belongs to the flavoprotein pyridine nucleotide cytochrome reductase family. It depends on FAD as a cofactor.

The protein localises to the mitochondrion outer membrane. The catalysed reaction is 2 Fe(III)-[cytochrome b5] + NADH = 2 Fe(II)-[cytochrome b5] + NAD(+) + H(+). Functionally, may mediate the reduction of outer membrane cytochrome b5. The polypeptide is NADH-cytochrome b5 reductase 2 (MCR1) (Mycosarcoma maydis (Corn smut fungus)).